Here is a 2006-residue protein sequence, read N- to C-terminus: E3 ubiquitin-protein ligase PRT6 (2006 aa).

The UBR-type zinc-finger motif lies at 119-189; it reads GVCGSVWGQN…PDGFCSNHKG (71 aa). Disordered stretches follow at residues 1167–1186 and 1338–1380; these read LSSS…SDSV and DHQP…AGSD. A compositionally biased stretch (basic and acidic residues) spans 1338–1348; that stretch reads DHQPHEAENCS. Over residues 1349-1360 the composition is skewed to polar residues; sequence EKNSVGGPSTLQ. Basic and acidic residues predominate over residues 1364–1377; it reads PDIRSRQTSRRPDA. The segment at 1395–1440 adopts an RING-type; degenerate zinc-finger fold; sequence CGHAVHQSCLERYLKSLKERSGRRTVFEGAHIVDLKKKEFLCPVCR.

Belongs to the E3 ubiquitin-protein ligase UBR1-like family.

It carries out the reaction S-ubiquitinyl-[E2 ubiquitin-conjugating enzyme]-L-cysteine + [acceptor protein]-L-lysine = [E2 ubiquitin-conjugating enzyme]-L-cysteine + N(6)-ubiquitinyl-[acceptor protein]-L-lysine.. It participates in protein modification; protein ubiquitination. Functionally, ubiquitin protein ligase which is a component of the N-end rule pathway with arginine specificity, and functions with the arginyltransferases ATE1 and ATE2. Recognizes and binds to proteins bearing specific N-terminal residues that are destabilizing according to the N-end rule, leading to their ubiquitination and subsequent degradation. Does not participate in degradation of proteins with N-terminal Phe or Leu. The N-end rule pathway regulates seed after-ripening, seedling sugar sensitivity, seedling lipid breakdown, and abscisic acid (ABA) sensitivity of germination. The N-end rule pathway regulates various aspects of leaf and shoot development. Involved in the ubiquitination and subsequent degradation of RAP2-12, an activator of hypoxic gene expression. The ubiquitination occurs after the N-arginylation of RAP2-12 by ATE1 or ATE2 under aerobic conditions. The end-rule pathway plays a role in regulating the timing and amplitude of the immune response following infection with the bacterial pathogen Pseudomonas syringae pv tomato. Regulates the biosynthesis of plant-defense metabolites such as glucosinolates, and the biosynthesis and response to the phytohormone jasmonate (JA), which plays a key role in plant immunity. Controls the expression of specific defense-response genes, activates the synthesis pathway for the phytoalexin camalexin, and influences basal resistance to the hemibiotroph pathogen Pseudomonas syringae pv tomato. Coordinates the mobilization of seed storage reserves and regulates the abundance and activities of several proteases following seed germination. The protein is E3 ubiquitin-protein ligase PRT6 of Arabidopsis thaliana (Mouse-ear cress).